The primary structure comprises 348 residues: Competence protein ComGA (348 aa).

Gly145–Thr152 is an ATP binding site.

It belongs to the GSP E family.

It is found in the cell membrane. In terms of biological role, required for uptake of DNA by competent cells. The polypeptide is Competence protein ComGA (comGA) (Halalkalibacterium halodurans (strain ATCC BAA-125 / DSM 18197 / FERM 7344 / JCM 9153 / C-125) (Bacillus halodurans)).